The following is a 449-amino-acid chain: C4-dicarboxylate transport protein 1 (449 aa).

The next 8 membrane-spanning stretches (helical) occupy residues F16–V38, M53–G71, V84–G106, I157–E176, G197–G219, L229–L251, G311–M333, and L358–L380.

It belongs to the dicarboxylate/amino acid:cation symporter (DAACS) (TC 2.A.23) family.

It is found in the cell inner membrane. Functionally, responsible for the transport of dicarboxylates such as succinate, fumarate, and malate from the periplasm across the membrane. The protein is C4-dicarboxylate transport protein 1 (dctA1) of Pseudomonas aeruginosa (strain ATCC 15692 / DSM 22644 / CIP 104116 / JCM 14847 / LMG 12228 / 1C / PRS 101 / PAO1).